Consider the following 160-residue polypeptide: MAKQKKHPQGNIAQNKKALHDYFIEQKFEAGLALSGWEVKSLRAGKAQLVDSYVLLKDGEAWLMGSHITPLKTASTHVIADPTRTRKLLLHKRELGRLFGSVQQKGYACVALSLYWKKHLIKCEIALAKGKKEYDKRDTEKARDSDREIQRAIRSKGKED.

Positions 131–160 (KKEYDKRDTEKARDSDREIQRAIRSKGKED) are disordered.

This sequence belongs to the SmpB family.

The protein localises to the cytoplasm. Functionally, required for rescue of stalled ribosomes mediated by trans-translation. Binds to transfer-messenger RNA (tmRNA), required for stable association of tmRNA with ribosomes. tmRNA and SmpB together mimic tRNA shape, replacing the anticodon stem-loop with SmpB. tmRNA is encoded by the ssrA gene; the 2 termini fold to resemble tRNA(Ala) and it encodes a 'tag peptide', a short internal open reading frame. During trans-translation Ala-aminoacylated tmRNA acts like a tRNA, entering the A-site of stalled ribosomes, displacing the stalled mRNA. The ribosome then switches to translate the ORF on the tmRNA; the nascent peptide is terminated with the 'tag peptide' encoded by the tmRNA and targeted for degradation. The ribosome is freed to recommence translation, which seems to be the essential function of trans-translation. The polypeptide is SsrA-binding protein (Azotobacter vinelandii (strain DJ / ATCC BAA-1303)).